The chain runs to 328 residues: D-cysteine desulfhydrase (328 aa).

Lys51 carries the post-translational modification N6-(pyridoxal phosphate)lysine.

The protein belongs to the ACC deaminase/D-cysteine desulfhydrase family. In terms of assembly, homodimer. The cofactor is pyridoxal 5'-phosphate.

It carries out the reaction D-cysteine + H2O = hydrogen sulfide + pyruvate + NH4(+) + H(+). Functionally, catalyzes the alpha,beta-elimination reaction of D-cysteine and of several D-cysteine derivatives. It could be a defense mechanism against D-cysteine. This Salmonella paratyphi A (strain AKU_12601) protein is D-cysteine desulfhydrase.